The sequence spans 849 residues: Leucine--tRNA ligase (849 aa).

Residues 44-54 carry the 'HIGH' region motif; sequence PYPSGRIHMGH. Residues 620-624 carry the 'KMSKS' region motif; it reads KMSKS. An ATP-binding site is contributed by Lys623.

It belongs to the class-I aminoacyl-tRNA synthetase family.

Its subcellular location is the cytoplasm. The enzyme catalyses tRNA(Leu) + L-leucine + ATP = L-leucyl-tRNA(Leu) + AMP + diphosphate. The polypeptide is Leucine--tRNA ligase (Sphingopyxis alaskensis (strain DSM 13593 / LMG 18877 / RB2256) (Sphingomonas alaskensis)).